Consider the following 356-residue polypeptide: Outer membrane protein Omp38 (356 aa).

The signal sequence occupies residues 1–19 (MKLSRIALATMLVAAPLAA). One can recognise an OmpA-like domain in the interval 221–339 (ELTEDLNMEL…RVFATITGSR (119 aa)).

The protein belongs to the outer membrane OOP (TC 1.B.6) superfamily. In terms of assembly, homotrimer.

The protein resides in the cell outer membrane. Its function is as follows. Porin. Induces apoptosis in human cells through caspases-dependent and AIF-dependent pathways. Purified Omp38 enters the cells and localizes to the mitochondria, which leads to a release of proapoptotic molecules such as cytochrome c and AIF (apoptosis-inducing factor). In Acinetobacter baumannii (strain ATCC 17978 / DSM 105126 / CIP 53.77 / LMG 1025 / NCDC KC755 / 5377), this protein is Outer membrane protein Omp38 (omp38).